A 926-amino-acid polypeptide reads, in one-letter code: MGARAVLGVTLAVACAGAFFASILRRKDLLGGDTEASGVAGLVEASRLLVDEAIHTTMRRNLRKRGIFSPSQLLSFSKLPEPTSRTASRAAEIMETAVQEVKRRVCRRRDTDQLPTDVLSEELLSTIANLSGCLPHMLPPSCPHTCLANKYRLITGACNNRDHPRWGASNTALARWLPPAYEDGVTEPRGWNPHFLYNGLPLPPVREVTRQVIHVSNEAVTEDGQYSDLLMAWGQYIDHDIAFTPQSTSKAAFAGGADCQLTCENRSPCFPIQLPTNASGAAGATCLPFYRSSAACGSGRQGALVGNLSWAAPRQQMNGLTSFLDASTVYGSSPAQEQRLRNWTSAEGLLRVNTRHRDAGRAFLPFAPPPAPPACAPEPGTPAARAPCFLAGDSRASEVPGLTALHTLWLREHNRLAAAFKALNAHWSADTVYQEARKVVGALHQIVTLRDYVPKILGAEAFGQHVGPYQGYDPAVDPTVSNVFSTAAFRFGHATIHPLVRRLDARFQEHPGSHLPLRAAFFQPWRLLREGGVDPVLRGLLARPAKLQVQDQLMNEELTERLFVLSNSGTLDLASINLQRGRDHGLPGYNEWREFCGLSRLETWADLSAATANGRVADRILGLYQHPDNIDVWLGGLAESFLPGARTGPLFACIIGKQMRALRDGDRFWWENPGVFTEAQRRELSRHSMSRVICDNSGLSHVPLDAFRVGQWPQEFEPCASIQGMDLGAWREAPPSGDACGFPDPVEDGGFLLCEERGQRVLVFSCRHGFRLRGPAQITCTPRGWDSPPPLCKDINECEDETDPPCHASARCKNTKGGVLCECSDPLVLGEDGRTCVDAGRLPRASVVSIALGAVLVCGLAGLAWTVVCRWTHADARPLLPVGEGEGDGKSPSLPLPGCGNRRDVGAAPALEVEQDLSCGSRGLCE.

Residues 1-14 (MGARAVLGVTLAVA) form the signal peptide. Residues 19 to 844 (FFASILRRKD…TCVDAGRLPR (826 aa)) are Extracellular-facing. N-linked (GlcNAc...) asparagine glycosylation occurs at asparagine 129. An intrachain disulfide couples cysteine 142 to cysteine 158. Aspartate 238 serves as a coordination point for heme b. Histidine 239 serves as the catalytic Proton acceptor. Aspartate 240 provides a ligand contact to Ca(2+). 2 disulfides stabilise this stretch: cysteine 259–cysteine 269 and cysteine 263–cysteine 286. Residues asparagine 277 and asparagine 307 are each glycosylated (N-linked (GlcNAc...) asparagine). Positions 321, 323, 325, and 327 each coordinate Ca(2+). N-linked (GlcNAc...) asparagine glycosylation occurs at asparagine 342. Glutamate 398 and histidine 493 together coordinate heme b. Cystine bridges form between cysteine 596–cysteine 653, cysteine 694–cysteine 719, cysteine 740–cysteine 780, cysteine 766–cysteine 792, cysteine 798–cysteine 812, cysteine 806–cysteine 821, and cysteine 823–cysteine 836. Positions 738 to 793 (DACGFPDPVEDGGFLLCEERGQRVLVFSCRHGFRLRGPAQITCTPRGWDSPPPLCK) constitute a Sushi domain. The 44-residue stretch at 794-837 (DINECEDETDPPCHASARCKNTKGGVLCECSDPLVLGEDGRTCV) folds into the EGF-like; calcium-binding domain. The helical transmembrane segment at 845–869 (ASVVSIALGAVLVCGLAGLAWTVVC) threads the bilayer. At 870–926 (RWTHADARPLLPVGEGEGDGKSPSLPLPGCGNRRDVGAAPALEVEQDLSCGSRGLCE) the chain is on the cytoplasmic side.

It belongs to the peroxidase family. XPO subfamily. In terms of assembly, interacts with DUOX1, DUOX2 and CYBA. Requires Ca(2+) as cofactor. Heme b serves as cofactor. Heme is covalently bound through a H(2)O(2)-dependent autocatalytic process. Heme insertion is important for the delivery of protein at the cell surface. Post-translationally, cleaved in its N-terminal part. In terms of processing, N-glycosylated; contains mannose and N-acetylglucosamine.

The protein resides in the membrane. The catalysed reaction is 2 iodide + H2O2 + 2 H(+) = diiodine + 2 H2O. It carries out the reaction [thyroglobulin]-L-tyrosine + iodide + H2O2 + H(+) = [thyroglobulin]-3-iodo-L-tyrosine + 2 H2O. It catalyses the reaction [thyroglobulin]-3-iodo-L-tyrosine + iodide + H2O2 + H(+) = [thyroglobulin]-3,5-diiodo-L-tyrosine + 2 H2O. The enzyme catalyses 2 [thyroglobulin]-3,5-diiodo-L-tyrosine + H2O2 = [thyroglobulin]-L-thyroxine + [thyroglobulin]-dehydroalanine + 2 H2O. The catalysed reaction is [thyroglobulin]-3-iodo-L-tyrosine + [thyroglobulin]-3,5-diiodo-L-tyrosine + H2O2 = [thyroglobulin]-3,3',5-triiodo-L-thyronine + [thyroglobulin]-dehydroalanine + 2 H2O. It participates in hormone biosynthesis; thyroid hormone biosynthesis. Functionally, iodination and coupling of the hormonogenic tyrosines in thyroglobulin to yield the thyroid hormones T(3) and T(4). The chain is Thyroid peroxidase (TPO) from Sus scrofa (Pig).